The following is a 179-amino-acid chain: Replication restart protein DnaT (179 aa).

The interval 151-179 (SRASNGGQPKRDVNSVSEPDSHIPRGFRG) is disordered. A compositionally biased stretch (basic and acidic residues) spans 159 to 173 (PKRDVNSVSEPDSHI).

It belongs to the DnaT family. In terms of assembly, homooligomerizes. Interacts with PriB. Component of the replication restart primosome. Primosome assembly occurs via a 'hand-off' mechanism. PriA binds to replication forks, subsequently PriB then DnaT bind; DnaT then displaces ssDNA to generate the helicase loading substrate.

In terms of biological role, involved in the restart of stalled replication forks, which reloads the replicative helicase on sites other than the origin of replication. Can function in multiple replication restart pathways. Displaces ssDNA from a PriB-ssDNA complex. Probably forms a spiral filament on ssDNA. The sequence is that of Replication restart protein DnaT from Klebsiella pneumoniae (strain 342).